The primary structure comprises 576 residues: MDVRFYPAAAGDPASLDFAQCLGYYGYSKFGNNNNYMNMAEANNAFFAASEQTFHTPSLGDEEFEIPPITPPPESDPALGMPDVLLPFQALSDPLPSQGSEFTPQFPPQSLDLPSITISRNLVEQDGVLHSSGLHMDQSHTQVSQYRQDPSLIMRSIVHMTDAARSGVMPPAQLTTINQSQLSAQLGLNLGGASMPHTSPSPPASKSATPSPSSSINEEDADEANRAIGEKRAAPDSGKKPKTPKKKKKKDPNEPQKPVSAYALFFRDTQAAIKGQNPNATFGEVSKIVASMWDSLGEEQKQVYKRKTEAAKKEYLKALAAYRASLVSKAAAESAEAQTIRSVQQTLASTNLTSSLLLNTPLSQHGTVSASPQTLQQSLPRSIAPKPLTMRLPMNQIVTSVTIAANMPSNIGAPLISSMGTTMVGSAPSTQVSPSVQTQQHQMQLQQQQQQQQQQMQQMQQQQLQQHQMHQQIQQQMQQQHFQHHMQQHLQQQQQHLQQQINQQQLQQQLQQRLQLQQLQHMQHQSQPSPRQHSPVASQITSPIPAIGSPQPASQQHQSQIQSQTQTQVLSQVSIF.

3 disordered regions span residues 189 to 258 (NLGG…PQKP), 422 to 443 (TMVG…QHQM), and 519 to 563 (LQHM…QIQS). Residues 204–215 (ASKSATPSPSSS) show a composition bias toward low complexity. The span at 223–239 (EANRAIGEKRAAPDSGK) shows a compositional bias: basic and acidic residues. A compositionally biased stretch (basic residues) spans 240-250 (KPKTPKKKKKK). The HMG box DNA-binding region spans 255–323 (PQKPVSAYAL…EYLKALAAYR (69 aa)). Low complexity predominate over residues 428–443 (PSTQVSPSVQTQQHQM). Residues 528 to 542 (PSPRQHSPVASQITS) show a composition bias toward polar residues. Low complexity predominate over residues 549-563 (SPQPASQQHQSQIQS).

As to quaternary structure, homodimer. Interacts with CREB1; the interaction is not depolarization dependent. Interacts with CREBBP (via C-terminus). Interacts (via HGM box) with CITED1 (via C-terminus); the interaction increases estrogen-response element (ERE)-dependent transcription and protection against cell death. Interacts with CREB1 (phosphorylated form). In terms of tissue distribution, expressed mainly in epithelial cells. Expressed in the central nervous system (CNS), in the ileum and within the brain in the frontal and occipital lobe.

It is found in the nucleus. Its function is as follows. Transcriptional coactivator of the p300/CBP-mediated transcription complex. Activates transactivation through cAMP response element (CRE) sites. Protects against cell death by inducing antiapoptotic and repressing pro-apoptotic transcripts. Stimulates transcription from the estrogen-responsive or BCL-2 promoters. Required for depolarization-induced transcription activation of the C-FOS promoter in neurons. Associates with chromatin to the estrogen-responsive C3 promoter region. The chain is TOX high mobility group box family member 3 (TOX3) from Homo sapiens (Human).